We begin with the raw amino-acid sequence, 594 residues long: Probable translation initiation factor IF-2 (594 aa).

In terms of domain architecture, tr-type G spans 3 to 220 (IRSPIVSVLG…MLMGLAQQYL (218 aa)). Residues 12 to 19 (GHVDHGKT) are G1. 12–19 (GHVDHGKT) contacts GTP. The interval 37–41 (GITQH) is G2. The tract at residues 76 to 79 (DTPG) is G3. GTP-binding positions include 76-80 (DTPGH) and 130-133 (NKID). The interval 130-133 (NKID) is G4. The interval 198–200 (SAI) is G5.

The protein belongs to the TRAFAC class translation factor GTPase superfamily. Classic translation factor GTPase family. IF-2 subfamily.

In terms of biological role, function in general translation initiation by promoting the binding of the formylmethionine-tRNA to ribosomes. Seems to function along with eIF-2. This chain is Probable translation initiation factor IF-2 (infB), found in Methanothermobacter thermautotrophicus (strain ATCC 29096 / DSM 1053 / JCM 10044 / NBRC 100330 / Delta H) (Methanobacterium thermoautotrophicum).